Consider the following 216-residue polypeptide: Urease operon 23 kDa accessory protein (216 aa).

Functionally, involved in the expression of hydrogenase activity. May be a regulatory gene affecting the expression of the hydrogenase operon or could be involved in the process of nickel incorporation into the hydrogenase apoenzyme. The sequence is that of Urease operon 23 kDa accessory protein from Rhizobium meliloti (strain 1021) (Ensifer meliloti).